Here is a 561-residue protein sequence, read N- to C-terminus: Inner membrane ABC transporter ATP-binding protein YddA (561 aa).

Residues 1 to 3 (MIT) lie on the Cytoplasmic side of the membrane. A helical membrane pass occupies residues 4 to 24 (IPITLRMLIAKYLCLLKPFWL). Topologically, residues 25–31 (RKNNKTS) are periplasmic. Residues 32 to 52 (VLLIIIILAMILGVVKIQVWL) form a helical membrane-spanning segment. The ABC transmembrane type-1 domain maps to 35 to 337 (IIIILAMILG…FIYKYDELAE (303 aa)). The Cytoplasmic portion of the chain corresponds to 53-70 (NDWNNDFFNALSQKETDK). The helical transmembrane segment at 71–91 (LWQLVLWFPALLGIFVLISVN) threads the bilayer. Residues 92–151 (KTWLIKLLTIRWREWLTDYYLNRWFADKNYYFTQIYGEHKNTDNPDQRIAEDILLLISKT) are Periplasmic-facing. The chain crosses the membrane as a helical span at residues 152–172 (LSLSFGFIQSLSMLITFTVIL). The Cytoplasmic portion of the chain corresponds to 173-187 (WESAGTLSFTVGGTE). The chain crosses the membrane as a helical span at residues 188-208 (WNIQGYMVYTVVLIVIGGTLF). The Periplasmic segment spans residues 209-290 (THKVGKRIRP…WQNIYSRSLS (82 aa)). A helical membrane pass occupies residues 291–311 (VLPYFLLLPQFISGQINLGGL). At 312–561 (MKSRQAFMLV…DDICDISAVL (250 aa)) the chain is on the cytoplasmic side. One can recognise an ABC transporter domain in the interval 367-561 (VQVADASIRT…DDICDISAVL (195 aa)). Residue 400–407 (GYSGAGKT) coordinates ATP.

It belongs to the ABC transporter superfamily.

The protein resides in the cell inner membrane. The polypeptide is Inner membrane ABC transporter ATP-binding protein YddA (yddA) (Escherichia coli (strain K12)).